The sequence spans 117 residues: Peptidyl-tRNA hydrolase (117 aa).

It belongs to the PTH2 family.

It localises to the cytoplasm. It carries out the reaction an N-acyl-L-alpha-aminoacyl-tRNA + H2O = an N-acyl-L-amino acid + a tRNA + H(+). In terms of biological role, the natural substrate for this enzyme may be peptidyl-tRNAs which drop off the ribosome during protein synthesis. This Thermoplasma acidophilum (strain ATCC 25905 / DSM 1728 / JCM 9062 / NBRC 15155 / AMRC-C165) protein is Peptidyl-tRNA hydrolase.